Here is a 396-residue protein sequence, read N- to C-terminus: NADH-quinone oxidoreductase subunit D (396 aa).

Belongs to the complex I 49 kDa subunit family. In terms of assembly, NDH-1 is composed of 14 different subunits. Subunits NuoB, C, D, E, F, and G constitute the peripheral sector of the complex.

The protein resides in the cell inner membrane. The catalysed reaction is a quinone + NADH + 5 H(+)(in) = a quinol + NAD(+) + 4 H(+)(out). NDH-1 shuttles electrons from NADH, via FMN and iron-sulfur (Fe-S) centers, to quinones in the respiratory chain. The immediate electron acceptor for the enzyme in this species is believed to be ubiquinone. Couples the redox reaction to proton translocation (for every two electrons transferred, four hydrogen ions are translocated across the cytoplasmic membrane), and thus conserves the redox energy in a proton gradient. The polypeptide is NADH-quinone oxidoreductase subunit D (Rhizobium johnstonii (strain DSM 114642 / LMG 32736 / 3841) (Rhizobium leguminosarum bv. viciae)).